We begin with the raw amino-acid sequence, 453 residues long: CBL-interacting protein kinase 24 (453 aa).

Residues 18–271 (YEVGRTIGQG…IEQIREDTWF (254 aa)) form the Protein kinase domain. ATP-binding positions include 24–32 (IGQGTFAKV) and Lys-47. Residue Asp-141 is the Proton acceptor of the active site. Residues 159–186 (DFGLSTLAQKGVGLLHTTCGTPNYVAPE) form an activation loop region. Positions 310-336 (NDGGPLVMNAFEMITLSQGLDLSALFD) constitute an NAF domain. A PPI region spans residues 343 to 372 (KRQTRFVSRKPAKTIVATIEVVAETMGLKV).

The protein belongs to the protein kinase superfamily. CAMK Ser/Thr protein kinase family. SNF1 subfamily. Interacts with CBL4. Requires Mn(2+) as cofactor.

The enzyme catalyses L-seryl-[protein] + ATP = O-phospho-L-seryl-[protein] + ADP + H(+). It carries out the reaction L-threonyl-[protein] + ATP = O-phospho-L-threonyl-[protein] + ADP + H(+). In terms of biological role, involved in the regulatory pathway for the control of intracellular Na(+) and K(+) homeostasis and salt tolerance. Operates in synergy with CBL4 to activate the plasma membrane Na(+)/H(+) antiporter SOS1. CIPK serine-threonine protein kinases interact with CBL proteins. Binding of a CBL protein to the regulatory NAF domain of CIPK protein lead to the activation of the kinase in a calcium-dependent manner. The polypeptide is CBL-interacting protein kinase 24 (CIPK24) (Oryza sativa subsp. japonica (Rice)).